A 358-amino-acid chain; its full sequence is Arginase (358 aa).

Residues histidine 146, aspartate 174, histidine 176, and aspartate 178 each coordinate Mn(2+). Substrate-binding positions include 176–180 (HADIN), 187–189 (SGN), and aspartate 233. Positions 280 and 282 each coordinate Mn(2+). 2 residues coordinate substrate: threonine 294 and glutamate 325.

The protein belongs to the arginase family. In terms of assembly, homohexamer. Mn(2+) is required as a cofactor.

The protein localises to the cytoplasm. The catalysed reaction is L-arginine + H2O = urea + L-ornithine. Its pathway is nitrogen metabolism; urea cycle; L-ornithine and urea from L-arginine: step 1/1. This is Arginase (aga-1) from Neurospora crassa (strain ATCC 24698 / 74-OR23-1A / CBS 708.71 / DSM 1257 / FGSC 987).